The primary structure comprises 405 residues: Probable glucan 1,3-beta-glucosidase A (405 aa).

An N-terminal signal peptide occupies residues Met1–Ala26. The active-site Proton donor is the Glu198. 2 disulfides stabilise this stretch: Cys278-Cys403 and Cys304-Cys330. The active-site Nucleophile is the Glu296.

It belongs to the glycosyl hydrolase 5 (cellulase A) family. Monomer. The cofactor is Mn(2+).

Its subcellular location is the secreted. The enzyme catalyses Successive hydrolysis of beta-D-glucose units from the non-reducing ends of (1-&gt;3)-beta-D-glucans, releasing alpha-glucose.. In terms of biological role, beta-glucanases participate in the metabolism of beta-glucan, the main structural component of the cell wall. It could also function biosynthetically as a transglycosylase. This Emericella nidulans (strain FGSC A4 / ATCC 38163 / CBS 112.46 / NRRL 194 / M139) (Aspergillus nidulans) protein is Probable glucan 1,3-beta-glucosidase A (exgA).